We begin with the raw amino-acid sequence, 53 residues long: ATP synthase protein 8 (53 aa).

Residues 4 to 24 form a helical membrane-spanning segment; that stretch reads MAPISWLLLFIIFSITFILFC.

Belongs to the ATPase protein 8 family. F-type ATPases have 2 components, CF(1) - the catalytic core - and CF(0) - the membrane proton channel.

It is found in the mitochondrion membrane. In terms of biological role, mitochondrial membrane ATP synthase (F(1)F(0) ATP synthase or Complex V) produces ATP from ADP in the presence of a proton gradient across the membrane which is generated by electron transport complexes of the respiratory chain. F-type ATPases consist of two structural domains, F(1) - containing the extramembraneous catalytic core and F(0) - containing the membrane proton channel, linked together by a central stalk and a peripheral stalk. During catalysis, ATP synthesis in the catalytic domain of F(1) is coupled via a rotary mechanism of the central stalk subunits to proton translocation. Part of the complex F(0) domain. Minor subunit located with subunit a in the membrane. In Drosophila sechellia (Fruit fly), this protein is ATP synthase protein 8 (mt:ATPase8).